We begin with the raw amino-acid sequence, 306 residues long: D-alanine--D-alanine ligase (306 aa).

In terms of domain architecture, ATP-grasp spans 104 to 303 (KMLWKAFGLP…FEQLVVKILE (200 aa)). 134–189 (VAKLGLPLMVKPSLEGSSVGLTKVKAVEELKSAVEYALKFDNTILIEEWLAGDELT) contributes to the ATP binding site. Mg(2+)-binding residues include Asp-257, Glu-270, and Asn-272.

The protein belongs to the D-alanine--D-alanine ligase family. Requires Mg(2+) as cofactor. Mn(2+) serves as cofactor.

The protein localises to the cytoplasm. The enzyme catalyses 2 D-alanine + ATP = D-alanyl-D-alanine + ADP + phosphate + H(+). It participates in cell wall biogenesis; peptidoglycan biosynthesis. In terms of biological role, cell wall formation. This chain is D-alanine--D-alanine ligase, found in Haemophilus influenzae (strain 86-028NP).